An 80-amino-acid polypeptide reads, in one-letter code: Small pacifastin protease inhibitor (80 aa).

An N-terminal signal peptide occupies residues 1–24 (MSKVLKVGLLLLLVAVAASAYAVA). A propeptide spanning residues 25 to 47 (EENGAPKENKQLPQIDDYGVTNK) is cleaved from the precursor. In terms of domain architecture, Pacifastin spans 45-80 (TNKCPANQPFKWNCNYCTCGPEGKDASCTRMACPQH). 3 disulfides stabilise this stretch: Cys48–Cys63, Cys58–Cys77, and Cys61–Cys72.

This sequence belongs to the protease inhibitor I19 family. Expressed in the venom apparatus. Low transcript levels are also detected in other tissues.

It is found in the secreted. Parasitic wasp protein that may interfere with the host immune response. The recombinant protein inhibits trypsin activity and prophenoloxidase (PPO) activation, an enzyme essential for both clotting and insect innate immune responses. It does not inhibit activity of chymotrypsin and protease K, and has no effect on phenoloxidase (PO) activity. This is Small pacifastin protease inhibitor from Nasonia vitripennis (Parasitic wasp).